The chain runs to 101 residues: Small ribosomal subunit protein uS14 (101 aa).

It belongs to the universal ribosomal protein uS14 family. In terms of assembly, part of the 30S ribosomal subunit. Contacts proteins S3 and S10.

Functionally, binds 16S rRNA, required for the assembly of 30S particles and may also be responsible for determining the conformation of the 16S rRNA at the A site. This Bordetella petrii (strain ATCC BAA-461 / DSM 12804 / CCUG 43448) protein is Small ribosomal subunit protein uS14.